The primary structure comprises 327 residues: UPF0285 protein Maeo_0978 (327 aa).

Belongs to the UPF0285 family.

In Methanococcus aeolicus (strain ATCC BAA-1280 / DSM 17508 / OCM 812 / Nankai-3), this protein is UPF0285 protein Maeo_0978.